The chain runs to 156 residues: MSRRHAAEKREILPDAKFGDTVLTKFMNNLMIDGKKSVAESIVYNALDRVQTRLKREPLEAFHEALDNVKPSVEVRSRRVGGATYQVPVEVRTERREALAIRWLITAARKRNENTMEERLAAELADACNNRGTAVKKREDTHKMADANKAFSHYRW.

Belongs to the universal ribosomal protein uS7 family. In terms of assembly, part of the 30S ribosomal subunit. Contacts proteins S9 and S11.

One of the primary rRNA binding proteins, it binds directly to 16S rRNA where it nucleates assembly of the head domain of the 30S subunit. Is located at the subunit interface close to the decoding center, probably blocks exit of the E-site tRNA. The protein is Small ribosomal subunit protein uS7A/uS7B of Cereibacter sphaeroides (strain ATCC 17029 / ATH 2.4.9) (Rhodobacter sphaeroides).